The chain runs to 145 residues: D-aminoacyl-tRNA deacylase (145 aa).

A Gly-cisPro motif, important for rejection of L-amino acids motif is present at residues 137 to 138 (GP).

This sequence belongs to the DTD family. In terms of assembly, homodimer.

It is found in the cytoplasm. The enzyme catalyses glycyl-tRNA(Ala) + H2O = tRNA(Ala) + glycine + H(+). It catalyses the reaction a D-aminoacyl-tRNA + H2O = a tRNA + a D-alpha-amino acid + H(+). In terms of biological role, an aminoacyl-tRNA editing enzyme that deacylates mischarged D-aminoacyl-tRNAs. Also deacylates mischarged glycyl-tRNA(Ala), protecting cells against glycine mischarging by AlaRS. Acts via tRNA-based rather than protein-based catalysis; rejects L-amino acids rather than detecting D-amino acids in the active site. By recycling D-aminoacyl-tRNA to D-amino acids and free tRNA molecules, this enzyme counteracts the toxicity associated with the formation of D-aminoacyl-tRNA entities in vivo and helps enforce protein L-homochirality. The sequence is that of D-aminoacyl-tRNA deacylase from Limosilactobacillus fermentum (strain NBRC 3956 / LMG 18251) (Lactobacillus fermentum).